We begin with the raw amino-acid sequence, 206 residues long: Macrophage immunometabolism regulator (206 aa).

The residue at position 1 (M1) is an N-acetylmethionine. Positions 1–41 are disordered; the sequence is MEVDINGESRSTLTTLPFPGAEANSPGKAEAEKPRCSSTPC. Phosphoserine is present on residues S25, S140, and S167.

This sequence belongs to the UNC119-binding protein family. As to quaternary structure, interacts with UNC119 and UNC119B; interaction preferentially takes place when UNC119 and UNC119B are unliganded with myristoylated proteins.

Its subcellular location is the cytoplasm. The protein resides in the cell projection. The protein localises to the cilium. Its function is as follows. Regulates the macrophage function, by enhancing the resolution of inflammation and wound repair functions mediated by M2 macrophages. The regulation of macrophage function is, due at least in part, to its ability to inhibit glycolysis. May also play a role in trafficking of proteins via its interaction with UNC119 and UNC119B cargo adapters: may help the release of UNC119 and UNC119B cargo or the recycling of UNC119 and UNC119B. May play a role in ciliary membrane localization via its interaction with UNC119B and protein transport into photoreceptor cells. The chain is Macrophage immunometabolism regulator (MACIR) from Pongo abelii (Sumatran orangutan).